The following is an 89-amino-acid chain: NADH-ubiquinone oxidoreductase chain 4L (89 aa).

The next 3 helical transmembrane spans lie at methionine 1 to asparagine 21, isoleucine 22 to valine 42, and isoleucine 57 to phenylalanine 77.

It belongs to the complex I subunit 4L family.

The protein resides in the mitochondrion membrane. The catalysed reaction is a ubiquinone + NADH + 5 H(+)(in) = a ubiquinol + NAD(+) + 4 H(+)(out). In terms of biological role, core subunit of the mitochondrial membrane respiratory chain NADH dehydrogenase (Complex I) that is believed to belong to the minimal assembly required for catalysis. Complex I functions in the transfer of electrons from NADH to the respiratory chain. The immediate electron acceptor for the enzyme is believed to be ubiquinone. The chain is NADH-ubiquinone oxidoreductase chain 4L (ND4L) from Hypocrea jecorina (Trichoderma reesei).